A 161-amino-acid polypeptide reads, in one-letter code: Photosystem II extrinsic protein V (161 aa).

Positions 1–25 are cleaved as a signal peptide; that stretch reads MKKFFISVVFIVLLTFTTFINSATA. The heme c site is built by Cys61, Cys64, His65, and His116.

Belongs to the cytochrome c family. PsbV subfamily. In terms of assembly, PSII is composed of 1 copy each of membrane proteins PsbA, PsbB, PsbC, PsbD, PsbE, PsbF, PsbH, PsbI, PsbJ, PsbK, PsbL, PsbM, PsbT, PsbX, PsbY, PsbZ, Psb30/Ycf12, peripheral proteins PsbO, CyanoQ (PsbQ), PsbU, PsbV and a large number of cofactors. It forms dimeric complexes. Heme c serves as cofactor.

The protein localises to the cellular thylakoid membrane. One of the extrinsic, lumenal subunits of photosystem II (PSII). PSII is a light-driven water plastoquinone oxidoreductase, using light energy to abstract electrons from H(2)O, generating a proton gradient subsequently used for ATP formation. The extrinsic proteins stabilize the structure of photosystem II oxygen-evolving complex (OEC), the ion environment of oxygen evolution and protect the OEC against heat-induced inactivation. Low-potential cytochrome c that plays a role in the OEC of PSII. This Trichodesmium erythraeum (strain IMS101) protein is Photosystem II extrinsic protein V.